We begin with the raw amino-acid sequence, 489 residues long: uncharacterized protein (489 aa).

The residue at position 26 (Thr-26) is a Phosphothreonine. Ser-27 is modified (phosphoserine). 3 helical membrane-spanning segments follow: residues 63–83 (IVYL…IEFA), 182–202 (LVWS…ILCA), and 221–241 (VFKL…IAFL). 3 disordered regions span residues 260–312 (PKTS…APLE), 401–435 (STLL…VPPS), and 450–489 (PSIN…PVVH). Residue Ser-263 is modified to Phosphoserine. A compositionally biased stretch (polar residues) spans 268-282 (QRGTSSSQPSENDAN). The segment covering 450–465 (PSINNVGGSTAPSVNN) has biased composition (polar residues). Positions 477–489 (SRSSTLTERPVVH) are enriched in low complexity.

It localises to the endoplasmic reticulum membrane. This is an uncharacterized protein from Schizosaccharomyces pombe (strain 972 / ATCC 24843) (Fission yeast).